Here is a 50-residue protein sequence, read N- to C-terminus: Basic phospholipase A2 Bmaj-9 (50 aa).

Ca(2+) contacts are provided by Tyr-27, Gly-29, and Gly-31. An intrachain disulfide couples Cys-28 to Cys-45. Residue His-48 is part of the active site. Asp-49 is a binding site for Ca(2+).

The protein belongs to the phospholipase A2 family. Group II subfamily. D49 sub-subfamily. Ca(2+) is required as a cofactor. Expressed by the venom gland.

The protein localises to the secreted. It catalyses the reaction a 1,2-diacyl-sn-glycero-3-phosphocholine + H2O = a 1-acyl-sn-glycero-3-phosphocholine + a fatty acid + H(+). Its function is as follows. Snake venom phospholipase A2 (PLA2) that causes irreversible neuromuscular blockade in chick biventer cervicis muscle preparations. The neuromuscular blockade is mediated by inhibitory action at the presynaptic motor nerve endings. PLA2 catalyzes the calcium-dependent hydrolysis of the 2-acyl groups in 3-sn-phosphoglycerides. The protein is Basic phospholipase A2 Bmaj-9 of Bothrops marajoensis (Marajo lancehead).